We begin with the raw amino-acid sequence, 620 residues long: MIEERDLVLSNGIHCIADIHSELYARLKKESQAATPWVYQKQYGKFVTYFVAVIIFLSLIKKLAFMYYDSSEEFLPEKKNSPTTPSVFLARIMTKLVAFNRYICYRKFPTLIFSYLGIPTSVGTFLVVMATTLYTLLYCFVPHPFYRPCAGFGSPPLSVRAGIMAISLVPFVFSLSGKINVIGWLVGLSYEKINIYHQWASILCLFFSWVHVIPFLRQARHEGGYERMHQRWKASDMWRSGVPPILFLNLLWLSSLPIARRHFYEIFLQLHWILAVGFYISLFYHVYPELNSHMYLVATIVVWFAQLFYRLAVKGYLRPGRSFMASTIANVSIVGEGCVELIVKDVEMAYSPGQHIFVRTIDKGIISNHPFSIFPSAKYPGGIKMLIRAQKGFSKRLYESNDDMKKILIDGPYGGIERDIRSFTNVYLICSGSGISTCLPFLQKYGPILHKTNLEVITLDWVVRHREDISWIRDEMCTLSNNLRQLFLDGKIVVRIYVCSDSTVPGIIKTFPQTIDTASDQSDLAKREKDTEFGQDDTESNSTFDKSNNEYKGLITIIPSKPDLNQVINDYQIGFRNCFICSGSDSLRYTVGNSVAGLQAKVFSNKNVEECYLHSESFGY.

Residues 1–45 lie on the Extracellular side of the membrane; that stretch reads MIEERDLVLSNGIHCIADIHSELYARLKKESQAATPWVYQKQYGK. A helical transmembrane segment spans residues 46–66; sequence FVTYFVAVIIFLSLIKKLAFM. Topologically, residues 67–107 are cytoplasmic; sequence YYDSSEEFLPEKKNSPTTPSVFLARIMTKLVAFNRYICYRK. A helical membrane pass occupies residues 108–128; that stretch reads FPTLIFSYLGIPTSVGTFLVV. Topologically, residues 129–167 are extracellular; it reads MATTLYTLLYCFVPHPFYRPCAGFGSPPLSVRAGIMAIS. The Ferric oxidoreductase domain occupies 161 to 320; it reads AGIMAISLVP…LAVKGYLRPG (160 aa). A helical membrane pass occupies residues 168–188; that stretch reads LVPFVFSLSGKINVIGWLVGL. The Cytoplasmic portion of the chain corresponds to 189 to 194; that stretch reads SYEKIN. A helical membrane pass occupies residues 195–215; that stretch reads IYHQWASILCLFFSWVHVIPF. Heme contacts are provided by His-197 and His-211. At 216 to 237 the chain is on the extracellular side; the sequence is LRQARHEGGYERMHQRWKASDM. Residues 238–258 form a helical membrane-spanning segment; it reads WRSGVPPILFLNLLWLSSLPI. Topologically, residues 259–265 are cytoplasmic; sequence ARRHFYE. A helical membrane pass occupies residues 266–286; that stretch reads IFLQLHWILAVGFYISLFYHV. Residues His-271 and His-285 each contribute to the heme site. At 287 to 292 the chain is on the extracellular side; it reads YPELNS. A helical transmembrane segment spans residues 293-313; that stretch reads HMYLVATIVVWFAQLFYRLAV. Topologically, residues 314–620 are cytoplasmic; it reads KGYLRPGRSF…CYLHSESFGY (307 aa). One can recognise an FAD-binding FR-type domain in the interval 321–419; the sequence is RSFMASTIAN…DGPYGGIERD (99 aa). 369 to 375 serves as a coordination point for FAD; it reads HPFSIFP. 411–414 serves as a coordination point for NADP(+); that stretch reads GPYG. A disordered region spans residues 519–543; it reads SDQSDLAKREKDTEFGQDDTESNST. Basic and acidic residues predominate over residues 523 to 532; sequence DLAKREKDTE. 578–579 serves as a coordination point for NADP(+); sequence CF.

The protein belongs to the ferric reductase (FRE) family. The cofactor is FAD.

The protein localises to the cell membrane. The catalysed reaction is 2 a Fe(II)-siderophore + NADP(+) + H(+) = 2 a Fe(III)-siderophore + NADPH. In terms of biological role, cell surface metalloreductase. May be involved in copper homeostasis. This Saccharomyces cerevisiae (strain ATCC 204508 / S288c) (Baker's yeast) protein is Ferric/cupric reductase transmembrane component 7 (FRE7).